The sequence spans 231 residues: Large ribosomal subunit protein uL1 (231 aa).

Belongs to the universal ribosomal protein uL1 family. In terms of assembly, part of the 50S ribosomal subunit.

Binds directly to 23S rRNA. The L1 stalk is quite mobile in the ribosome, and is involved in E site tRNA release. Its function is as follows. Protein L1 is also a translational repressor protein, it controls the translation of the L11 operon by binding to its mRNA. In Agrobacterium fabrum (strain C58 / ATCC 33970) (Agrobacterium tumefaciens (strain C58)), this protein is Large ribosomal subunit protein uL1.